A 301-amino-acid polypeptide reads, in one-letter code: Nucleosome assembly protein 1;3 (301 aa).

A coiled-coil region spans residues 15–69 (VETLKNKLQALAEQHVDVLESLAPVVRKRVDVLIEIQSQHDELEAKFLEEKSALE). Positions 36 to 51 (LAPVVRKRVDVLIEIQ) match the Nuclear export signal motif. The segment at 279 to 301 (EDYGASWVDDEEDDDDEYSDEEA) is disordered. Ser297 carries the phosphoserine; by CK2 modification.

This sequence belongs to the nucleosome assembly protein (NAP) family.

The protein localises to the nucleus. Its subcellular location is the cytoplasm. Its function is as follows. May modulate chromatin structure by regulation of nucleosome assembly/disassembly. The chain is Nucleosome assembly protein 1;3 (NAP1;3) from Oryza sativa subsp. indica (Rice).